Reading from the N-terminus, the 102-residue chain is Small ribosomal subunit protein uS10 (102 aa).

It belongs to the universal ribosomal protein uS10 family. Part of the 30S ribosomal subunit.

Functionally, involved in the binding of tRNA to the ribosomes. The chain is Small ribosomal subunit protein uS10 from Dehalococcoides mccartyi (strain ATCC BAA-2100 / JCM 16839 / KCTC 5957 / BAV1).